The sequence spans 341 residues: Ribosomal RNA small subunit methyltransferase H (341 aa).

S-adenosyl-L-methionine is bound by residues 47–49, aspartate 64, phenylalanine 97, aspartate 109, and glutamine 116; that span reads GGY.

It belongs to the methyltransferase superfamily. RsmH family.

The protein resides in the cytoplasm. The catalysed reaction is cytidine(1402) in 16S rRNA + S-adenosyl-L-methionine = N(4)-methylcytidine(1402) in 16S rRNA + S-adenosyl-L-homocysteine + H(+). Its function is as follows. Specifically methylates the N4 position of cytidine in position 1402 (C1402) of 16S rRNA. The sequence is that of Ribosomal RNA small subunit methyltransferase H from Allorhizobium ampelinum (strain ATCC BAA-846 / DSM 112012 / S4) (Agrobacterium vitis (strain S4)).